A 510-amino-acid polypeptide reads, in one-letter code: Peroxidase 2 (510 aa).

Residues M1 to A19 form the signal peptide. The propeptide occupies L20–A58. Catalysis depends on D228, which acts as the Proton acceptor. Position 362 (H362) interacts with heme.

As to quaternary structure, homodimer. The cofactor is heme b.

Peroxidase capable of degrading beta-carotene. This Mycetinis scorodonius (Garlic mushroom) protein is Peroxidase 2.